A 107-amino-acid chain; its full sequence is MIEENVKKFNQIIDDLLERSKNTYVYDPDIYKDIRNAQIFLVKFAQSDINPECIDILHKAFQTLSDAYYVVRWYVKQDKRHVVRVLKEKFNTAKDLVSGINSEICGE.

This is an uncharacterized protein from Acidianus convivator (ABV).